Here is a 131-residue protein sequence, read N- to C-terminus: Cystatin-like cysteine protease inhibitor EPIC3 (131 aa).

Positions 1 to 20 (MAFTRSIALFAGLALAASSA) are cleaved as a signal peptide. A glycan (N-linked (GlcNAc...) asparagine) is linked at N33. Positions 71 to 75 (QTVAG) match the Secondary area of contact motif.

This sequence belongs to the cystatin family.

It is found in the secreted. Functionally, secreted effector that interacts with and inhibits host apoplastic pathogenesis-related papain-like cysteine proteases. Inhibition of host proteases by a pathogen extracellular protease inhibitor forms a specific type of defense-counterdefense mechanism between plants and microbial pathogens. This Phytophthora infestans (Potato late blight agent) protein is Cystatin-like cysteine protease inhibitor EPIC3.